Consider the following 334-residue polypeptide: Beta-hexosaminidase (334 aa).

Residues Asp57, Arg65, Arg128, and 158 to 159 contribute to the substrate site; that span reads KH. Catalysis depends on His171, which acts as the Proton donor/acceptor. Catalysis depends on Asp242, which acts as the Nucleophile.

This sequence belongs to the glycosyl hydrolase 3 family. NagZ subfamily.

The protein resides in the cytoplasm. The enzyme catalyses Hydrolysis of terminal non-reducing N-acetyl-D-hexosamine residues in N-acetyl-beta-D-hexosaminides.. It functions in the pathway cell wall biogenesis; peptidoglycan recycling. Its function is as follows. Plays a role in peptidoglycan recycling by cleaving the terminal beta-1,4-linked N-acetylglucosamine (GlcNAc) from peptide-linked peptidoglycan fragments, giving rise to free GlcNAc, anhydro-N-acetylmuramic acid and anhydro-N-acetylmuramic acid-linked peptides. This Methylococcus capsulatus (strain ATCC 33009 / NCIMB 11132 / Bath) protein is Beta-hexosaminidase.